The following is a 228-amino-acid chain: Superoxide dismutase [Mn], mitochondrial (228 aa).

Residues 1 to 24 constitute a mitochondrion transit peptide; it reads MALRTLVSRRTLATGLGFRQQLRG. Residues His-52, His-100, Asp-189, and His-193 each contribute to the Mn(2+) site.

It belongs to the iron/manganese superoxide dismutase family. In terms of assembly, homotetramer. The cofactor is Mn(2+). Expressed most abundantly in parts of the plant which exhibit a high metabolic activity. Expressed in pre-shooting flower buds, vegetative buds, immature fruits and fully expanded leaves of basal shoots and seedlings.

The protein localises to the mitochondrion matrix. It carries out the reaction 2 superoxide + 2 H(+) = H2O2 + O2. In terms of biological role, destroys superoxide anion radicals which are normally produced within the cells and which are toxic to biological systems. The polypeptide is Superoxide dismutase [Mn], mitochondrial (SOD) (Prunus persica (Peach)).